A 906-amino-acid polypeptide reads, in one-letter code: Protein translocase subunit SecA (906 aa).

ATP is bound by residues glutamine 86, 104–108 (GEGKT), and aspartate 511. Over residues 852–888 (EHESVIDNNQRHDEDEQEEAPKVKQVRREGPKVKRND) the composition is skewed to basic and acidic residues. Positions 852–906 (EHESVIDNNQRHDEDEQEEAPKVKQVRREGPKVKRNDPCPCGSGKKYKQCHSKVE) are disordered. Residues cysteine 890, cysteine 892, cysteine 901, and histidine 902 each contribute to the Zn(2+) site. A compositionally biased stretch (basic residues) spans 896–906 (KKYKQCHSKVE).

It belongs to the SecA family. As to quaternary structure, monomer and homodimer. Part of the essential Sec protein translocation apparatus which comprises SecA, SecYEG and auxiliary proteins SecDF-YajC and YidC. Zn(2+) serves as cofactor.

The protein resides in the cell inner membrane. It localises to the cytoplasm. It catalyses the reaction ATP + H2O + cellular proteinSide 1 = ADP + phosphate + cellular proteinSide 2.. Functionally, part of the Sec protein translocase complex. Interacts with the SecYEG preprotein conducting channel. Has a central role in coupling the hydrolysis of ATP to the transfer of proteins into and across the cell membrane, serving both as a receptor for the preprotein-SecB complex and as an ATP-driven molecular motor driving the stepwise translocation of polypeptide chains across the membrane. This Francisella tularensis subsp. tularensis (strain SCHU S4 / Schu 4) protein is Protein translocase subunit SecA.